The primary structure comprises 670 residues: DNA ligase (670 aa).

NAD(+)-binding positions include 34 to 38, 83 to 84, and E117; these read DAEYD and SL. K119 (N6-AMP-lysine intermediate) is an active-site residue. Positions 140, 177, 293, and 317 each coordinate NAD(+). Residues C411, C414, C429, and C434 each coordinate Zn(2+). One can recognise a BRCT domain in the interval 591–670; it reads KVGGRFTGKT…DEFLAMLEEG (80 aa).

It belongs to the NAD-dependent DNA ligase family. LigA subfamily. The cofactor is Mg(2+). Mn(2+) serves as cofactor.

It carries out the reaction NAD(+) + (deoxyribonucleotide)n-3'-hydroxyl + 5'-phospho-(deoxyribonucleotide)m = (deoxyribonucleotide)n+m + AMP + beta-nicotinamide D-nucleotide.. In terms of biological role, DNA ligase that catalyzes the formation of phosphodiester linkages between 5'-phosphoryl and 3'-hydroxyl groups in double-stranded DNA using NAD as a coenzyme and as the energy source for the reaction. It is essential for DNA replication and repair of damaged DNA. This is DNA ligase from Geobacter sulfurreducens (strain ATCC 51573 / DSM 12127 / PCA).